The sequence spans 75 residues: ATP synthase subunit c (75 aa).

The next 2 helical transmembrane spans lie at Leu-12 to Val-32 and Leu-49 to Gly-69.

It belongs to the ATPase C chain family. F-type ATPases have 2 components, F(1) - the catalytic core - and F(0) - the membrane proton channel. F(1) has five subunits: alpha(3), beta(3), gamma(1), delta(1), epsilon(1). F(0) has three main subunits: a(1), b(2) and c(10-14). The alpha and beta chains form an alternating ring which encloses part of the gamma chain. F(1) is attached to F(0) by a central stalk formed by the gamma and epsilon chains, while a peripheral stalk is formed by the delta and b chains.

The protein resides in the cell membrane. F(1)F(0) ATP synthase produces ATP from ADP in the presence of a proton or sodium gradient. F-type ATPases consist of two structural domains, F(1) containing the extramembraneous catalytic core and F(0) containing the membrane proton channel, linked together by a central stalk and a peripheral stalk. During catalysis, ATP synthesis in the catalytic domain of F(1) is coupled via a rotary mechanism of the central stalk subunits to proton translocation. Functionally, key component of the F(0) channel; it plays a direct role in translocation across the membrane. A homomeric c-ring of between 10-14 subunits forms the central stalk rotor element with the F(1) delta and epsilon subunits. This Tropheryma whipplei (strain TW08/27) (Whipple's bacillus) protein is ATP synthase subunit c.